The chain runs to 111 residues: Probable 4-amino-4-deoxy-L-arabinose-phosphoundecaprenol flippase subunit ArnE (111 aa).

A run of 3 helical transmembrane segments spans residues 38–58 (LWLG…LLVL), 61–81 (LPVG…TLAA), and 91–111 (PRHW…GSAA). The EamA domain occupies 40–109 (LGLALICMGA…IISGIIILGS (70 aa)).

This sequence belongs to the ArnE family. In terms of assembly, heterodimer of ArnE and ArnF.

Its subcellular location is the cell inner membrane. It functions in the pathway bacterial outer membrane biogenesis; lipopolysaccharide biosynthesis. In terms of biological role, translocates 4-amino-4-deoxy-L-arabinose-phosphoundecaprenol (alpha-L-Ara4N-phosphoundecaprenol) from the cytoplasmic to the periplasmic side of the inner membrane. The protein is Probable 4-amino-4-deoxy-L-arabinose-phosphoundecaprenol flippase subunit ArnE of Salmonella agona (strain SL483).